The chain runs to 163 residues: Photosystem II extrinsic protein V (163 aa).

The first 26 residues, 1–26 (MFKTYSKSFACILFCIFNIFVVSASA), serve as a signal peptide directing secretion. Heme c contacts are provided by C63, C66, H67, and M130.

This sequence belongs to the cytochrome c family. PsbV subfamily. In terms of assembly, PSII is composed of 1 copy each of membrane proteins PsbA, PsbB, PsbC, PsbD, PsbE, PsbF, PsbH, PsbI, PsbJ, PsbK, PsbL, PsbM, PsbT, PsbY, PsbZ, Psb30/Ycf12, at least 3 peripheral proteins of the oxygen-evolving complex and a large number of cofactors. It forms dimeric complexes. It depends on heme c as a cofactor.

The protein resides in the plastid. It localises to the chloroplast thylakoid membrane. One of the extrinsic, lumenal subunits of photosystem II (PSII). PSII is a light-driven water plastoquinone oxidoreductase, using light energy to abstract electrons from H(2)O, generating a proton gradient subsequently used for ATP formation. The extrinsic proteins stabilize the structure of photosystem II oxygen-evolving complex (OEC), the ion environment of oxygen evolution and protect the OEC against heat-induced inactivation. This is Photosystem II extrinsic protein V from Thalassiosira pseudonana (Marine diatom).